The following is a 290-amino-acid chain: Acetylglutamate kinase (290 aa).

Residues 65–66 (GG), Arg87, and Asn186 each bind substrate.

This sequence belongs to the acetylglutamate kinase family. ArgB subfamily.

It localises to the cytoplasm. The enzyme catalyses N-acetyl-L-glutamate + ATP = N-acetyl-L-glutamyl 5-phosphate + ADP. The protein operates within amino-acid biosynthesis; L-arginine biosynthesis; N(2)-acetyl-L-ornithine from L-glutamate: step 2/4. Its function is as follows. Catalyzes the ATP-dependent phosphorylation of N-acetyl-L-glutamate. This is Acetylglutamate kinase from Mycobacterium sp. (strain KMS).